The following is a 507-amino-acid chain: Steroid (22S)-hydroxylase (507 aa).

Residues 12–32 form a helical membrane-spanning segment; the sequence is LLFFLPYILLALLTFYTTTVA. Cys-444 provides a ligand contact to heme.

This sequence belongs to the cytochrome P450 family. The cofactor is heme.

Its subcellular location is the membrane. It catalyses the reaction a C27-steroid + reduced [NADPH--hemoprotein reductase] + O2 = a (22S)-22-hydroxy C27-steroid + oxidized [NADPH--hemoprotein reductase] + H2O + H(+). It carries out the reaction a C28-steroid + reduced [NADPH--hemoprotein reductase] + O2 = a (22S)-22-hydroxy C28-steroid + oxidized [NADPH--hemoprotein reductase] + H2O + H(+). The enzyme catalyses campesterol + reduced [NADPH--hemoprotein reductase] + O2 = (22S)-22-hydroxycampesterol + oxidized [NADPH--hemoprotein reductase] + H2O + H(+). The catalysed reaction is campestanol + reduced [NADPH--hemoprotein reductase] + O2 = 6-deoxycathasterone + oxidized [NADPH--hemoprotein reductase] + H2O + H(+). It functions in the pathway plant hormone biosynthesis; brassinosteroid biosynthesis. Involved in reduction steps of the biosynthesis of plant campesterol-derivative steroids, ending to castasterone (CS) but missing brassinolide (BL). Catalyzes the conversion of campesterol (CR) to (22S)-22-hydroxycampesterol (22-OHCR, 22-hydroxyCR) and of campestanol (CN) to 6-deoxycathasterone (6-deoxoCT). This Brachypodium distachyon (Purple false brome) protein is Steroid (22S)-hydroxylase.